The chain runs to 322 residues: Malate dehydrogenase (322 aa).

NAD(+) contacts are provided by residues 10-15 (GSGMIG) and aspartate 34. Arginine 83 and arginine 89 together coordinate substrate. Residues asparagine 96 and 119–121 (ITN) contribute to the NAD(+) site. Positions 121 and 152 each coordinate substrate. The active-site Proton acceptor is histidine 176.

This sequence belongs to the LDH/MDH superfamily. MDH type 3 family.

The catalysed reaction is (S)-malate + NAD(+) = oxaloacetate + NADH + H(+). In terms of biological role, catalyzes the reversible oxidation of malate to oxaloacetate. The protein is Malate dehydrogenase of Mesorhizobium japonicum (strain LMG 29417 / CECT 9101 / MAFF 303099) (Mesorhizobium loti (strain MAFF 303099)).